A 117-amino-acid chain; its full sequence is MGWSCIMLFLAATATGVHSQVQLQQPGAELVKPGASVKLSCKASGYTFTSYWMHWVKQRPGRGLEWIGRIDPNSGGTKYNEKFKSKATLTVDKPSSTAYMQLSSLTSEDSAVYYCAR.

The N-terminal stretch at 1 to 19 (MGWSCIMLFLAATATGVHS) is a signal peptide. Positions 20-49 (QVQLQQPGAELVKPGASVKLSCKASGYTFT) are framework-1. A disulfide bridge connects residues Cys41 and Cys115. Residues 50–54 (SYWMH) form a complementarity-determining-1 region. Residues 55-68 (WVKQRPGRGLEWIG) are framework-2. The tract at residues 69–85 (RIDPNSGGTKYNEKFKS) is complementarity-determining-2. A framework-3 region spans residues 86–117 (KATLTVDKPSSTAYMQLSSLTSEDSAVYYCAR).

This is Ig heavy chain V region 1-72 from Mus musculus (Mouse).